The primary structure comprises 326 residues: MSQVVVCALYKFVSLPHFESIQKPLLALMEESGVKGTLLLASEGINGTVAGSQAAIDSLLMWLYQQPGLDNIVHKRSFDEQMPFYRTKVKLKKEIVTMGVEGIDPLKVVGTYVKPRDWNKLISDPDVLLVDTRNEYEIQIGTFKNAVDPKTDTFREFPAYVKDNLDPAKHKKVAMFCTGGIRCEKSTAYLKEQGFDEVYHLEGGVLKYLEEVKQEESLWEGECFVFDNRVAVNHNLEKGQYDQCNACRMPITETEKASEAYVQGVSCPHCIDSTSDKQRRRFEERERQMLLAAKRGEAHIGSDVSQVILSRRTEKEDQRQAQNKKA.

Residues 123–217 enclose the Rhodanese domain; sequence SDPDVLLVDT…YLEEVKQEES (95 aa). The Cysteine persulfide intermediate role is filled by cysteine 177. Positions 304–326 are disordered; the sequence is VSQVILSRRTEKEDQRQAQNKKA.

Belongs to the TrhO family.

The enzyme catalyses uridine(34) in tRNA + AH2 + O2 = 5-hydroxyuridine(34) in tRNA + A + H2O. Catalyzes oxygen-dependent 5-hydroxyuridine (ho5U) modification at position 34 in tRNAs. The protein is tRNA uridine(34) hydroxylase of Shewanella sediminis (strain HAW-EB3).